The chain runs to 143 residues: Large ribosomal subunit protein uL11 (143 aa).

It belongs to the universal ribosomal protein uL11 family. In terms of assembly, part of the ribosomal stalk of the 50S ribosomal subunit. Interacts with L10 and the large rRNA to form the base of the stalk. L10 forms an elongated spine to which L12 dimers bind in a sequential fashion forming a multimeric L10(L12)X complex. Post-translationally, one or more lysine residues are methylated.

Its function is as follows. Forms part of the ribosomal stalk which helps the ribosome interact with GTP-bound translation factors. The polypeptide is Large ribosomal subunit protein uL11 (Burkholderia cenocepacia (strain HI2424)).